The chain runs to 381 residues: MQGAVAGLVFLAVLVIFAIIVVAKSVALIPQAEAAVIERLGRYSRTVSGQLTLLVPFIDRVRARVDLRERVVSFPPQPVITEDNLTLNIDTVVYFQVTVPQAAVYEISNYIVGVEQLTTTTLRNVVGGMTLEQTLTSRDQINAQLRGVLDEATGRWGLRVARVELRSIDPPPSIQASMEKQMKADREKRAMILTAEGTREAAIKQAEGQKQAQILAAEGAKQAAILAAEADRQSRMLRAQGERAAAYLQAQGQAKAIEKTFAAIKAGRPTPEMLAYQYLQTLPEMARGDANKVWVVPSDFNAALQGFTRLLGKPGEDGVFRFEPSPVEDQPKHAADGDDAEVAGWFSTDTDPSIARAVATAEAIARKPVEGSLGTPPRLTQ.

A helical membrane pass occupies residues 3–23 (GAVAGLVFLAVLVIFAIIVVA).

This sequence belongs to the band 7/mec-2 family.

Its subcellular location is the membrane. This is an uncharacterized protein from Mycobacterium bovis (strain ATCC BAA-935 / AF2122/97).